A 142-amino-acid chain; its full sequence is Large ribosomal subunit protein uL13 (142 aa).

This sequence belongs to the universal ribosomal protein uL13 family. In terms of assembly, part of the 50S ribosomal subunit.

This protein is one of the early assembly proteins of the 50S ribosomal subunit, although it is not seen to bind rRNA by itself. It is important during the early stages of 50S assembly. This Citrobacter koseri (strain ATCC BAA-895 / CDC 4225-83 / SGSC4696) protein is Large ribosomal subunit protein uL13.